Here is a 1417-residue protein sequence, read N- to C-terminus: DNA-directed RNA polymerase subunit beta' (1417 aa).

The Zn(2+) site is built by Cys-68, Cys-70, Cys-83, and Cys-86. Positions 458, 460, and 462 each coordinate Mg(2+). Zn(2+) is bound by residues Cys-811, Cys-884, Cys-891, and Cys-894.

This sequence belongs to the RNA polymerase beta' chain family. The RNAP catalytic core consists of 2 alpha, 1 beta, 1 beta' and 1 omega subunit. When a sigma factor is associated with the core the holoenzyme is formed, which can initiate transcription. Requires Mg(2+) as cofactor. The cofactor is Zn(2+).

It carries out the reaction RNA(n) + a ribonucleoside 5'-triphosphate = RNA(n+1) + diphosphate. Functionally, DNA-dependent RNA polymerase catalyzes the transcription of DNA into RNA using the four ribonucleoside triphosphates as substrates. The chain is DNA-directed RNA polymerase subunit beta' from Francisella tularensis subsp. novicida (strain U112).